Consider the following 411-residue polypeptide: Citrate synthase (411 aa).

Active-site residues include H304 and D363.

Belongs to the citrate synthase family.

It catalyses the reaction oxaloacetate + acetyl-CoA + H2O = citrate + CoA + H(+). It participates in carbohydrate metabolism; tricarboxylic acid cycle; isocitrate from oxaloacetate: step 1/2. In Rickettsia australis, this protein is Citrate synthase (gltA).